Here is a 198-residue protein sequence, read N- to C-terminus: tRNA (pseudouridine(54)-N(1))-methyltransferase (198 aa).

S-adenosyl-L-methionine is bound at residue L128.

This sequence belongs to the methyltransferase superfamily. TrmY family. In terms of assembly, homodimer.

The protein localises to the cytoplasm. It catalyses the reaction pseudouridine(54) in tRNA + S-adenosyl-L-methionine = N(1)-methylpseudouridine(54) in tRNA + S-adenosyl-L-homocysteine + H(+). Specifically catalyzes the N1-methylation of pseudouridine at position 54 (Psi54) in tRNAs. The polypeptide is tRNA (pseudouridine(54)-N(1))-methyltransferase (Haloarcula marismortui (strain ATCC 43049 / DSM 3752 / JCM 8966 / VKM B-1809) (Halobacterium marismortui)).